Consider the following 838-residue polypeptide: Probable bifunctional folylpolyglutamate synthase/dihydropteroate synthase (838 aa).

The tract at residues 1–418 (MEYHEAVNFL…LVVGSLYVVA (418 aa)) is folylpolyglutamate synthase. 46-52 (GSNGKGS) contributes to the ATP binding site. The segment at 541–561 (AADAGEDDERGAGDASDAGHD) is disordered. The region spanning 569 to 819 (TAVMGILNVT…DVPENVAAVN (251 aa)) is the Pterin-binding domain. A DHPS region spans residues 571 to 838 (VMGILNVTPN…RFEADAERED (268 aa)). N576 provides a ligand contact to Mg(2+). (7,8-dihydropterin-6-yl)methyl diphosphate-binding positions include T616, D649, N668, D738, K774, and 807–809 (RVH).

In the N-terminal section; belongs to the folylpolyglutamate synthase family. The protein in the C-terminal section; belongs to the DHPS family. Requires Mg(2+) as cofactor.

It catalyses the reaction (6S)-5,6,7,8-tetrahydrofolyl-(gamma-L-Glu)(n) + L-glutamate + ATP = (6S)-5,6,7,8-tetrahydrofolyl-(gamma-L-Glu)(n+1) + ADP + phosphate + H(+). The enzyme catalyses (7,8-dihydropterin-6-yl)methyl diphosphate + 4-aminobenzoate = 7,8-dihydropteroate + diphosphate. It functions in the pathway cofactor biosynthesis; tetrahydrofolylpolyglutamate biosynthesis. The protein operates within cofactor biosynthesis; tetrahydrofolate biosynthesis; 7,8-dihydrofolate from 2-amino-4-hydroxy-6-hydroxymethyl-7,8-dihydropteridine diphosphate and 4-aminobenzoate: step 1/2. Functionally, can complement an H.volcanii mutant strain that is thymidine auxotroph because it lacks the two dihydrofolate reductase genes encoded by hdrA and hdrB. The chain is Probable bifunctional folylpolyglutamate synthase/dihydropteroate synthase (folCP) from Haloferax volcanii (strain ATCC 29605 / DSM 3757 / JCM 8879 / NBRC 14742 / NCIMB 2012 / VKM B-1768 / DS2) (Halobacterium volcanii).